Consider the following 197-residue polypeptide: Large ribosomal subunit protein uL11 (197 aa).

Belongs to the universal ribosomal protein uL11 family. As to quaternary structure, part of the ribosomal stalk of the 50S ribosomal subunit. Interacts with L10 and the large rRNA to form the base of the stalk. L10 forms an elongated spine to which L12 dimers bind in a sequential fashion forming a multimeric L10(L12)X complex. One or more lysine residues are methylated.

Its function is as follows. Forms part of the ribosomal stalk which helps the ribosome interact with GTP-bound translation factors. This chain is Large ribosomal subunit protein uL11, found in Mycoplasmopsis pulmonis (strain UAB CTIP) (Mycoplasma pulmonis).